Reading from the N-terminus, the 967-residue chain is A disintegrin and metalloproteinase with thrombospondin motifs 1 (967 aa).

Disordered stretches follow at residues 1-27 (MQRAVPEGFGRRKLGSDMGNAERAPGS) and 192-250 (GDVG…SIRK). A signal peptide spans 1–49 (MQRAVPEGFGRRKLGSDMGNAERAPGSRSFGPVPTLLLLAAALLAVSDA). Positions 50-252 (LGRPSEEDEE…TGTGSIRKKR (203 aa)) are excised as a propeptide. The Cysteine switch signature appears at 196 to 203 (GTCGVVDD). Cys-198 provides a ligand contact to Zn(2+). Basic and acidic residues predominate over residues 203 to 212 (DEPRPTGKAE). Over residues 213–226 (TEDEDEGTEGEDEG) the composition is skewed to acidic residues. Residues 258-467 (RYVETMLVAD…GHGECLMDKP (210 aa)) enclose the Peptidase M12B domain. Glu-261, Asp-344, and Asp-351 together coordinate Ca(2+). 4 disulfides stabilise this stretch: Cys-333–Cys-385, Cys-362–Cys-367, Cys-379–Cys-462, and Cys-417–Cys-446. Position 401 (His-401) interacts with Zn(2+). Residue Glu-402 is part of the active site. Residues His-405 and His-411 each coordinate Zn(2+). Ca(2+) is bound by residues Cys-462 and Asp-465. Residues 476–559 (DLPGTSYDAN…DRKHFDTPFH (84 aa)) enclose the Disintegrin domain. 4 cysteine pairs are disulfide-bonded: Cys-488-Cys-511, Cys-499-Cys-521, Cys-506-Cys-540, and Cys-534-Cys-545. The N-linked (GlcNAc...) asparagine glycan is linked to Asn-547. A TSP type-1 1 domain is found at 559 to 614 (HGSWGMWGPWGDCSRTCGGGVQYTMRECDNPVPKNGGKYCEGKRVRYRSCNLEDCP). Intrachain disulfides connect Cys-571/Cys-608, Cys-575/Cys-613, and Cys-586/Cys-598. Asn-720 and Asn-764 each carry an N-linked (GlcNAc...) asparagine glycan. Residues 725 to 849 (KKISGSVTSA…YFVKKKKESF (125 aa)) form a spacer region. TSP type-1 domains lie at 854–905 (TFSA…RPCA) and 908–967 (PCPQ…AECS).

Requires Zn(2+) as cofactor. The precursor is cleaved by a furin endopeptidase. In terms of processing, glycosylated. Can be O-fucosylated by POFUT2 on a serine or a threonine residue found within the consensus sequence C1-X(2)-(S/T)-C2-G of the TSP type-1 repeat domains where C1 and C2 are the first and second cysteine residue of the repeat, respectively. Fucosylated repeats can then be further glycosylated by the addition of a beta-1,3-glucose residue by the glucosyltransferase, B3GALTL. Fucosylation mediates the efficient secretion of ADAMTS family members. Can also be C-glycosylated with one or two mannose molecules on tryptophan residues within the consensus sequence W-X-X-W of the TPRs, and N-glycosylated. These other glycosylations can also facilitate secretion.

Its subcellular location is the secreted. It localises to the extracellular space. It is found in the extracellular matrix. Functionally, metalloprotease which cleaves aggrecan, a cartilage proteoglycan, at the '1938-Glu-|-Leu-1939' site (within the chondroitin sulfate attachment domain), and may be involved in its turnover. Also cleaves COMP. Has angiogenic inhibitor activity. May play a critical role in follicular rupture. In Homo sapiens (Human), this protein is A disintegrin and metalloproteinase with thrombospondin motifs 1 (ADAMTS1).